Here is a 596-residue protein sequence, read N- to C-terminus: Putative terpene synthase 2, chloroplastic (596 aa).

The N-terminal 46 residues, 1–46, are a transit peptide targeting the chloroplast; the sequence is MATLSMQVSTLSKQVKNLNTFGMGSASKLPMVARRVSTTRLRPICS. Residues aspartate 349 and aspartate 353 each coordinate Mn(2+). Positions 349–353 match the DDXXD motif motif; sequence DDVYD. Homodimerization stretches follow at residues 355-361 and 427-464; these read YGTLDEL and EAKW…FTLP. Residues aspartate 493 and glutamate 501 each contribute to the Mn(2+) site.

This sequence belongs to the terpene synthase family. Homodimer. Mn(2+) serves as cofactor. It depends on Mg(2+) as a cofactor.

The protein resides in the plastid. It localises to the chloroplast. It functions in the pathway secondary metabolite biosynthesis; terpenoid biosynthesis. Its function is as follows. Putative monoterpene synthase inactive on geranyl diphosphate (GPP). In Thymus vulgaris (Thyme), this protein is Putative terpene synthase 2, chloroplastic.